A 321-amino-acid polypeptide reads, in one-letter code: tRNA(Ile)-lysidine synthase (321 aa).

30–35 (SGGSDS) provides a ligand contact to ATP.

Belongs to the tRNA(Ile)-lysidine synthase family.

Its subcellular location is the cytoplasm. The enzyme catalyses cytidine(34) in tRNA(Ile2) + L-lysine + ATP = lysidine(34) in tRNA(Ile2) + AMP + diphosphate + H(+). Its function is as follows. Ligates lysine onto the cytidine present at position 34 of the AUA codon-specific tRNA(Ile) that contains the anticodon CAU, in an ATP-dependent manner. Cytidine is converted to lysidine, thus changing the amino acid specificity of the tRNA from methionine to isoleucine. This Chlamydia trachomatis serovar A (strain ATCC VR-571B / DSM 19440 / HAR-13) protein is tRNA(Ile)-lysidine synthase.